The primary structure comprises 458 residues: Serine protease Do-like HtrB (458 aa).

Positions 1-18 (MDYRRDGQNDQHQTEPSH) are enriched in basic and acidic residues. Residues 1–42 (MDYRRDGQNDQHQTEPSHTEQQNTENQKLIGHSEQELLDAPV) are disordered. Over 1-71 (MDYRRDGQND…TAVKKEKKRR (71 aa)) the chain is Cytoplasmic. A helical transmembrane segment spans residues 72 to 92 (AAWLSPILGGIIGGGLMLGIA). Residues 93 to 458 (PYLPSDQNQA…LTKQTESSSS (366 aa)) are Extracellular-facing. Residues 146 to 170 (QTSQNNTFGTGGGSSSESESGTGSG) are disordered. Catalysis depends on charge relay system residues histidine 187, aspartate 217, and serine 298. Residues 296–298 (GNS) and 352–356 (LGVQM) each bind substrate. Positions 356-440 (MIDMSQVPET…KTTIQVLRKG (85 aa)) constitute a PDZ domain.

It belongs to the peptidase S1C family.

It localises to the cell membrane. The enzyme catalyses Acts on substrates that are at least partially unfolded. The cleavage site P1 residue is normally between a pair of hydrophobic residues, such as Val-|-Val.. In terms of biological role, degrades abnormal exported proteins and responsible for the propeptide processing of a natural pro-protein and for the maturation of a native protein. It also plays a prominent role in stress (heat shock, ethanol, puromycin and NaCl) resistance during active exponential growth. The chain is Serine protease Do-like HtrB (htrB) from Bacillus subtilis (strain 168).